We begin with the raw amino-acid sequence, 341 residues long: Ribosomal RNA small subunit methyltransferase C (341 aa).

Belongs to the methyltransferase superfamily. RsmC family. Monomer.

It localises to the cytoplasm. It catalyses the reaction guanosine(1207) in 16S rRNA + S-adenosyl-L-methionine = N(2)-methylguanosine(1207) in 16S rRNA + S-adenosyl-L-homocysteine + H(+). Its function is as follows. Specifically methylates the guanine in position 1207 of 16S rRNA in the 30S particle. This Shewanella halifaxensis (strain HAW-EB4) protein is Ribosomal RNA small subunit methyltransferase C.